A 272-amino-acid chain; its full sequence is D-aminoacyl-tRNA deacylase (272 aa).

In terms of assembly, monomer. The cofactor is Zn(2+).

The enzyme catalyses a D-aminoacyl-tRNA + H2O = a tRNA + a D-alpha-amino acid + H(+). The catalysed reaction is glycyl-tRNA(Ala) + H2O = tRNA(Ala) + glycine + H(+). It carries out the reaction D-tyrosyl-tRNA(Tyr) + H2O = D-tyrosine + tRNA(Tyr). In terms of biological role, D-aminoacyl-tRNA deacylase with broad substrate specificity. By recycling D-aminoacyl-tRNA to D-amino acids and free tRNA molecules, this enzyme counteracts the toxicity associated with the formation of D-aminoacyl-tRNA entities in vivo. Catalyzes the hydrolysis of D-tyrosyl-tRNA(Tyr) and D-aspartyl-tRNA(Asp). The sequence is that of D-aminoacyl-tRNA deacylase from Pyrococcus abyssi (strain GE5 / Orsay).